A 349-amino-acid polypeptide reads, in one-letter code: Thiamine-phosphate synthase (349 aa).

The interval methionine 1 to glycine 125 is unknown. The interval arginine 63–serine 85 is disordered. The interval leucine 126–leucine 349 is thiamine-phosphate synthase. 4-amino-2-methyl-5-(diphosphooxymethyl)pyrimidine contacts are provided by residues glutamine 177–lysine 181 and asparagine 209. The Mg(2+) site is built by aspartate 210 and aspartate 229. The 4-amino-2-methyl-5-(diphosphooxymethyl)pyrimidine site is built by serine 248 and lysine 277. Glycine 304 provides a ligand contact to 2-[(2R,5Z)-2-carboxy-4-methylthiazol-5(2H)-ylidene]ethyl phosphate.

Belongs to the thiamine-phosphate synthase family. It depends on Mg(2+) as a cofactor.

The enzyme catalyses 2-[(2R,5Z)-2-carboxy-4-methylthiazol-5(2H)-ylidene]ethyl phosphate + 4-amino-2-methyl-5-(diphosphooxymethyl)pyrimidine + 2 H(+) = thiamine phosphate + CO2 + diphosphate. It carries out the reaction 2-(2-carboxy-4-methylthiazol-5-yl)ethyl phosphate + 4-amino-2-methyl-5-(diphosphooxymethyl)pyrimidine + 2 H(+) = thiamine phosphate + CO2 + diphosphate. The catalysed reaction is 4-methyl-5-(2-phosphooxyethyl)-thiazole + 4-amino-2-methyl-5-(diphosphooxymethyl)pyrimidine + H(+) = thiamine phosphate + diphosphate. It participates in cofactor biosynthesis; thiamine diphosphate biosynthesis; thiamine phosphate from 4-amino-2-methyl-5-diphosphomethylpyrimidine and 4-methyl-5-(2-phosphoethyl)-thiazole: step 1/1. In terms of biological role, condenses 4-methyl-5-(beta-hydroxyethyl)thiazole monophosphate (THZ-P) and 2-methyl-4-amino-5-hydroxymethyl pyrimidine pyrophosphate (HMP-PP) to form thiamine monophosphate (TMP). This chain is Thiamine-phosphate synthase, found in Parasynechococcus marenigrum (strain WH8102).